The chain runs to 277 residues: Insertion element IS407 uncharacterized 31.7 kDa protein (277 aa).

One can recognise an Integrase catalytic domain in the interval 103 to 264 (LPGAPNEVWS…APSEFAAKHR (162 aa)).

This Burkholderia multivorans (strain ATCC 17616 / 249) protein is Insertion element IS407 uncharacterized 31.7 kDa protein.